Consider the following 166-residue polypeptide: Interferon gamma (166 aa).

Residues 1–23 (MKYTSYFLALLLCVLLGFSGSYG) form the signal peptide. Q24 is modified (pyrrolidone carboxylic acid). N-linked (GlcNAc...) asparagine glycosylation is found at N39 and N106.

It belongs to the type II (or gamma) interferon family. Homodimer. Interacts with IFNGR1 (via extracellular domain); this interaction promotes IFNGR1 dimerization. As to expression, released primarily from activated T lymphocytes.

It localises to the secreted. In terms of biological role, type II interferon produced by immune cells such as T-cells and NK cells that plays crucial roles in antimicrobial, antiviral, and antitumor responses by activating effector immune cells and enhancing antigen presentation. Primarily signals through the JAK-STAT pathway after interaction with its receptor IFNGR1 to affect gene regulation. Upon IFNG binding, IFNGR1 intracellular domain opens out to allow association of downstream signaling components JAK2, JAK1 and STAT1, leading to STAT1 activation, nuclear translocation and transcription of IFNG-regulated genes. Many of the induced genes are transcription factors such as IRF1 that are able to further drive regulation of a next wave of transcription. Plays a role in class I antigen presentation pathway by inducing a replacement of catalytic proteasome subunits with immunoproteasome subunits. In turn, increases the quantity, quality, and repertoire of peptides for class I MHC loading. Increases the efficiency of peptide generation also by inducing the expression of activator PA28 that associates with the proteasome and alters its proteolytic cleavage preference. Up-regulates as well MHC II complexes on the cell surface by promoting expression of several key molecules such as cathepsins B/CTSB, H/CTSH, and L/CTSL. Participates in the regulation of hematopoietic stem cells during development and under homeostatic conditions by affecting their development, quiescence, and differentiation. This Bubalus bubalis (Domestic water buffalo) protein is Interferon gamma (IFNG).